The sequence spans 244 residues: DNA repair protein RecO (244 aa).

It belongs to the RecO family.

Functionally, involved in DNA repair and RecF pathway recombination. This is DNA repair protein RecO from Nocardioides sp. (strain ATCC BAA-499 / JS614).